We begin with the raw amino-acid sequence, 554 residues long: Phosphomethylpyrimidine synthase (554 aa).

Substrate is bound by residues Asn-188, Met-217, Tyr-246, His-282, Ser-302 to Gly-304, Asp-343 to Arg-346, and Glu-382. His-386 contributes to the Zn(2+) binding site. Substrate is bound at residue Tyr-409. His-450 lines the Zn(2+) pocket. 3 residues coordinate [4Fe-4S] cluster: Cys-530, Cys-533, and Cys-538.

The protein belongs to the ThiC family. In terms of assembly, homodimer. [4Fe-4S] cluster is required as a cofactor.

It carries out the reaction 5-amino-1-(5-phospho-beta-D-ribosyl)imidazole + S-adenosyl-L-methionine = 4-amino-2-methyl-5-(phosphooxymethyl)pyrimidine + CO + 5'-deoxyadenosine + formate + L-methionine + 3 H(+). The protein operates within cofactor biosynthesis; thiamine diphosphate biosynthesis. Functionally, catalyzes the synthesis of the hydroxymethylpyrimidine phosphate (HMP-P) moiety of thiamine from aminoimidazole ribotide (AIR) in a radical S-adenosyl-L-methionine (SAM)-dependent reaction. The sequence is that of Phosphomethylpyrimidine synthase from Coxiella burnetii (strain Dugway 5J108-111).